The chain runs to 490 residues: Ribulose bisphosphate carboxylase large chain (490 aa).

Substrate contacts are provided by Asn127 and Thr177. Catalysis depends on Lys179, which acts as the Proton acceptor. Residue Lys181 participates in substrate binding. Residues Lys205, Asp207, and Glu208 each contribute to the Mg(2+) site. Lys205 carries the N6-carboxylysine modification. Catalysis depends on His297, which acts as the Proton acceptor. Substrate is bound by residues Arg298, His330, and Ser382.

It belongs to the RuBisCO large chain family. Type I subfamily. Heterohexadecamer of 8 large chains and 8 small chains. Requires Mg(2+) as cofactor.

The protein resides in the plastid. The protein localises to the chloroplast. It carries out the reaction 2 (2R)-3-phosphoglycerate + 2 H(+) = D-ribulose 1,5-bisphosphate + CO2 + H2O. The enzyme catalyses D-ribulose 1,5-bisphosphate + O2 = 2-phosphoglycolate + (2R)-3-phosphoglycerate + 2 H(+). In terms of biological role, ruBisCO catalyzes two reactions: the carboxylation of D-ribulose 1,5-bisphosphate, the primary event in carbon dioxide fixation, as well as the oxidative fragmentation of the pentose substrate in the photorespiration process. Both reactions occur simultaneously and in competition at the same active site. The protein is Ribulose bisphosphate carboxylase large chain of Detonula confervacea (Marine diatom).